A 336-amino-acid chain; its full sequence is Cyclin-H1-1 (336 aa).

Ala-2 is subject to N-acetylalanine. The interval 297 to 336 (KSCLGHSSSHDESKKREKRSKHKSHRSSNDTPNGAPPPIG) is disordered. Residues 312-322 (REKRSKHKSHR) are compositionally biased toward basic residues.

Belongs to the cyclin family. As to quaternary structure, interacts with CDKA-1, CDKD-2 and CDKD-3, but not CDKD-1 and CDKF-1.

The protein resides in the cytoplasm. It is found in the nucleus. Functionally, associates with CDK-2 and CDK-3 and activates the CDK kinases. This is Cyclin-H1-1 (CYCH1-1) from Arabidopsis thaliana (Mouse-ear cress).